Consider the following 907-residue polypeptide: Protein translocase subunit SecA (907 aa).

Residues Gln87, 105–109 (GEGKT), and Asp512 each bind ATP. The disordered stretch occupies residues 834-907 (QEDVERMEEQ…KKYKQCHGKI (74 aa)). Composition is skewed to basic and acidic residues over residues 836 to 853 (DVERMEEQRRLQAEEAAR) and 873 to 888 (EEAHSPMVREERKVGR). Zn(2+) is bound by residues Cys892, Cys894, Cys903, and His904. Residues 898–907 (KKYKQCHGKI) show a composition bias toward basic residues.

This sequence belongs to the SecA family. As to quaternary structure, monomer and homodimer. Part of the essential Sec protein translocation apparatus which comprises SecA, SecYEG and auxiliary proteins SecDF-YajC and YidC. Requires Zn(2+) as cofactor.

It localises to the cell inner membrane. It is found in the cytoplasm. It catalyses the reaction ATP + H2O + cellular proteinSide 1 = ADP + phosphate + cellular proteinSide 2.. Part of the Sec protein translocase complex. Interacts with the SecYEG preprotein conducting channel. Has a central role in coupling the hydrolysis of ATP to the transfer of proteins into and across the cell membrane, serving both as a receptor for the preprotein-SecB complex and as an ATP-driven molecular motor driving the stepwise translocation of polypeptide chains across the membrane. The protein is Protein translocase subunit SecA of Aliivibrio fischeri (strain ATCC 700601 / ES114) (Vibrio fischeri).